The chain runs to 115 residues: NADH-ubiquinone oxidoreductase chain 3 (115 aa).

A run of 3 helical transmembrane segments spans residues 5 to 25 (LTFM…FWLP), 55 to 75 (FFLV…LLPL), and 86 to 106 (LMLT…AYEW).

This sequence belongs to the complex I subunit 3 family. In terms of assembly, core subunit of respiratory chain NADH dehydrogenase (Complex I) which is composed of 45 different subunits. Interacts with TMEM186. Interacts with TMEM242.

Its subcellular location is the mitochondrion inner membrane. The catalysed reaction is a ubiquinone + NADH + 5 H(+)(in) = a ubiquinol + NAD(+) + 4 H(+)(out). Core subunit of the mitochondrial membrane respiratory chain NADH dehydrogenase (Complex I) which catalyzes electron transfer from NADH through the respiratory chain, using ubiquinone as an electron acceptor. Essential for the catalytic activity of complex I. The sequence is that of NADH-ubiquinone oxidoreductase chain 3 from Avahi unicolor (Sambirano woolly lemur).